We begin with the raw amino-acid sequence, 458 residues long: Sulfite efflux pump SSU1 (458 aa).

At 1–11 the chain is on the cytoplasmic side; the sequence is MVANWVLALTR. The helical transmembrane segment at 12–32 threads the bilayer; sequence QFDPFMFMMVMGVGISSNILY. Residues 33–48 are Extracellular-facing; sequence SFPYPARWLRICSYIM. A helical membrane pass occupies residues 49-69; the sequence is FAIACLIFIAVQALQILHLIV. Residues 70–89 are Cytoplasmic-facing; that stretch reads YIKEKSFREYFNDFFRNMKH. Residues 90–110 form a helical membrane-spanning segment; that stretch reads NLFWGTYPMGLVTIINFLGAL. Over 111 to 135 the chain is Extracellular; sequence SKANTTKSPTNARNLMIFVYVLWWY. The chain crosses the membrane as a helical span at residues 136-156; that stretch reads DLAVCLVIAWGISFLIWHDYY. Residues 157-176 lie on the Cytoplasmic side of the membrane; the sequence is PLEGIGNYPSYNIKMASENM. The chain crosses the membrane as a helical span at residues 177 to 197; sequence KSVLLLDIIPLVVVASSCGTF. Residues 198-220 are Extracellular-facing; that stretch reads TMSEIFFHAFNRNIQLITLVICA. Residues 221–241 form a helical membrane-spanning segment; the sequence is LTWLHAIIFVFILIAIYFWSL. Residues 242-252 are Cytoplasmic-facing; it reads YINKIPPMTQV. A helical membrane pass occupies residues 253-275; it reads FTLFLLLGPMGQGSFGVLLLTDN. Residues 276–309 lie on the Extracellular side of the membrane; it reads IKKYAGKYYPTDNITREQEILTIAVPWCFKILGM. Residues 310-330 form a helical membrane-spanning segment; sequence VSAMALLAMGYFFTVISVVSI. The Cytoplasmic portion of the chain corresponds to 331-350; that stretch reads LSYYNKKEIENETGKVKRVY. The helical transmembrane segment at 351 to 371 threads the bilayer; it reads TFHKGFWGMTFPMGTMSLGNE. At 372–387 the chain is on the extracellular side; sequence ELYVQYNQYVPLYAFR. Residues 388-408 form a helical membrane-spanning segment; the sequence is VLGTIYGGVCVCWSILCLLCT. At 409–458 the chain is on the cytoplasmic side; that stretch reads LHEYSKKMLHAARKSSLFSESGTEKTTVSPYNSIESVEESNSALDFTRLA. 3 positions are modified to phosphoserine: serine 444, serine 448, and serine 450.

It belongs to the tellurite-resistance/dicarboxylate transporter (TDT) family.

Its subcellular location is the cell membrane. Its function is as follows. Involved in efflux of free sulfite. Mutations in the SSU1 gene cause sensitivity to sulfite. The sequence is that of Sulfite efflux pump SSU1 (SSU1) from Saccharomyces cerevisiae (strain ATCC 204508 / S288c) (Baker's yeast).